A 154-amino-acid polypeptide reads, in one-letter code: Acidic phospholipase A2 2 (154 aa).

Residues 1–19 form the signal peptide; it reads MHPAHLLVPLGVCVSLLGA. Residues 20-27 constitute a propeptide that is removed on maturation; the sequence is ARIPPLPL. Disulfide bonds link Cys38–Cys104, Cys54–Cys153, Cys56–Cys72, Cys71–Cys132, Cys78–Cys125, Cys88–Cys118, and Cys111–Cys123. The Ca(2+) site is built by Tyr55, Gly57, and Gly59. His75 is an active-site residue. Asp76 provides a ligand contact to Ca(2+). Asp126 is a catalytic residue.

The protein belongs to the phospholipase A2 family. Group I subfamily. D49 sub-subfamily. In terms of assembly, monomer. Ca(2+) serves as cofactor. As to expression, expressed by the venom gland.

Its subcellular location is the secreted. It catalyses the reaction a 1,2-diacyl-sn-glycero-3-phosphocholine + H2O = a 1-acyl-sn-glycero-3-phosphocholine + a fatty acid + H(+). Functionally, snake venom phospholipase A2 (PLA2) that shows moderate enzymatic activity and exhibits procoagulant activity. PLA2 catalyzes the calcium-dependent hydrolysis of the 2-acyl groups in 3-sn-phosphoglycerides. The chain is Acidic phospholipase A2 2 from Pseudonaja textilis (Eastern brown snake).